The following is a 286-amino-acid chain: Probable ketoamine kinase YniA (286 aa).

ATP is bound at residue 91 to 93; it reads DYL. Catalysis depends on D193, which acts as the Proton acceptor.

The protein belongs to the fructosamine kinase family.

Functionally, ketoamine kinase that phosphorylates ketoamines on the third carbon of the sugar moiety to generate ketoamine 3-phosphate. Its precise substrate are unknown: does not have ribulosamine and/or erythrulosamine 3-kinase activity in vitro. The protein is Probable ketoamine kinase YniA (yniA) of Escherichia coli (strain K12).